A 67-amino-acid chain; its full sequence is DNA-directed RNA polymerase subunit omega (67 aa).

It belongs to the RNA polymerase subunit omega family. In terms of assembly, the RNAP catalytic core consists of 2 alpha, 1 beta, 1 beta' and 1 omega subunit. When a sigma factor is associated with the core the holoenzyme is formed, which can initiate transcription.

It catalyses the reaction RNA(n) + a ribonucleoside 5'-triphosphate = RNA(n+1) + diphosphate. Its function is as follows. Promotes RNA polymerase assembly. Latches the N- and C-terminal regions of the beta' subunit thereby facilitating its interaction with the beta and alpha subunits. The protein is DNA-directed RNA polymerase subunit omega of Paracidovorax citrulli (strain AAC00-1) (Acidovorax citrulli).